The sequence spans 283 residues: Protein/nucleic acid deglycase HchA (283 aa).

Zn(2+)-binding residues include H86, E91, and H123. Catalysis depends on C185, which acts as the Nucleophile.

The protein belongs to the peptidase C56 family. HchA subfamily. In terms of assembly, homodimer.

The protein resides in the cytoplasm. It catalyses the reaction N(omega)-(1-hydroxy-2-oxopropyl)-L-arginyl-[protein] + H2O = lactate + L-arginyl-[protein] + H(+). The enzyme catalyses N(6)-(1-hydroxy-2-oxopropyl)-L-lysyl-[protein] + H2O = lactate + L-lysyl-[protein] + H(+). It carries out the reaction S-(1-hydroxy-2-oxopropyl)-L-cysteinyl-[protein] + H2O = lactate + L-cysteinyl-[protein] + H(+). The catalysed reaction is N(omega)-(1-hydroxy-2-oxoethyl)-L-arginyl-[protein] + H2O = L-arginyl-[protein] + glycolate + H(+). It catalyses the reaction N(6)-(1-hydroxy-2-oxoethyl)-L-lysyl-[protein] + H2O = glycolate + L-lysyl-[protein] + H(+). The enzyme catalyses S-(1-hydroxy-2-oxoethyl)-L-cysteinyl-[protein] + H2O = glycolate + L-cysteinyl-[protein] + H(+). It carries out the reaction N(2)-(1-hydroxy-2-oxopropyl)-dGTP + H2O = lactate + dGTP + H(+). The catalysed reaction is N(2)-(1-hydroxy-2-oxopropyl)-GTP + H2O = lactate + GTP + H(+). It catalyses the reaction N(2)-(1-hydroxy-2-oxopropyl)-GDP + H2O = lactate + GDP + H(+). The enzyme catalyses N(2)-(1-hydroxy-2-oxopropyl)-GMP + H2O = lactate + GMP + H(+). It carries out the reaction N(2)-(1-hydroxy-2-oxoethyl)-dGTP + H2O = dGTP + glycolate + H(+). The catalysed reaction is N(2)-(1-hydroxy-2-oxoethyl)-GTP + H2O = glycolate + GTP + H(+). It catalyses the reaction N(2)-(1-hydroxy-2-oxoethyl)-GDP + H2O = glycolate + GDP + H(+). The enzyme catalyses N(2)-(1-hydroxy-2-oxoethyl)-GMP + H2O = glycolate + GMP + H(+). It carries out the reaction an N(2)-(1-hydroxy-2-oxopropyl)-guanosine in RNA + H2O = a guanosine in RNA + lactate + H(+). The catalysed reaction is an N(2)-(1-hydroxy-2-oxopropyl)-2'-deoxyguanosine in DNA + H2O = a 2'-deoxyguanosine in DNA + lactate + H(+). It catalyses the reaction an N(2)-(1-hydroxy-2-oxoethyl)-guanosine in RNA + H2O = a guanosine in RNA + glycolate + H(+). The enzyme catalyses an N(2)-(1-hydroxy-2-oxoethyl)-2'-deoxyguanosine in DNA + H2O = a 2'-deoxyguanosine in DNA + glycolate + H(+). Its function is as follows. Protein and nucleotide deglycase that catalyzes the deglycation of the Maillard adducts formed between amino groups of proteins or nucleotides and reactive carbonyl groups of glyoxals. Thus, functions as a protein deglycase that repairs methylglyoxal- and glyoxal-glycated proteins, and releases repaired proteins and lactate or glycolate, respectively. Deglycates cysteine, arginine and lysine residues in proteins, and thus reactivates these proteins by reversing glycation by glyoxals. Acts on early glycation intermediates (hemithioacetals and aminocarbinols), preventing the formation of Schiff bases and advanced glycation endproducts (AGE). Also functions as a nucleotide deglycase able to repair glycated guanine in the free nucleotide pool (GTP, GDP, GMP, dGTP) and in DNA and RNA. Is thus involved in a major nucleotide repair system named guanine glycation repair (GG repair), dedicated to reversing methylglyoxal and glyoxal damage via nucleotide sanitization and direct nucleic acid repair. Plays an important role in protecting cells from carbonyl stress. In Escherichia coli O45:K1 (strain S88 / ExPEC), this protein is Protein/nucleic acid deglycase HchA.